A 664-amino-acid polypeptide reads, in one-letter code: NQLADGSWGDAGTFSIFDRILNTLACVVALRSWNIHPHKTDKGIWFMKKNMCRIDEENLEHMPIGFEVALPSLIDIAKKLEIDIPTQTRGLQEIYARREIKLKKIPRDIMHQVPTTLLHSLEGMAGLKWEKLLKLQSEDGSFLFSPSSTAFALQQTRDHNCLKYLTNHIHKFNGGVPNVYPVDLFEHLWAVDRLQRLGLSRYFEPEIEECIAYVHRQWTEKGICWARNSQVEDIDDTAMGFRLLRLHGYEVSADVFRHFKSDGGEFFCFKGQSTQAVTGMYNLYRASQLMFPGENILVDAARFSANFLQLKRAKNDLLDKWIITKDLPGEVGYALDVPWYASLPRVETRFYLDQYGGDDDVWIGKTLYRMPYVNNNKYLELAKLDYNNCQALHQQEWQNILKWYRSCSLGEFGMTERSLLQTYYVAAASVFEPEKSQERLAWAKTAILMETITSHFEFQQLSRDQKRAFITEFEHDSILKYTNGGRYKRRSSLVGTLVRTLNHLSLDILLAHGRDIHQPLKNAWCKWLNSWEEGGDAELLVRTLNLMSGGGRRRRWASEELLSSNPKHEQLLKATIGVCDKLRLFLRRKVQGGNGCMNATGMTTVEIESEMRELVKLVVTRSSSEDLDSEIKQNFLTIARSFYYAAYCNQGTINFHIAKVLFEK.

Lys-101 is a binding site for substrate. Mg(2+)-binding residues include Asp-233 and Asp-235. Residues 233–236 carry the DXDD motif motif; sequence DIDD. Lys-320 lines the substrate pocket.

The protein belongs to the terpene synthase family. Tpsc subfamily. It depends on Mg(2+) as a cofactor. As to expression, ubiquitous expression in roots, stems, leaves and flowers.

It is found in the plastid. It localises to the chloroplast. It catalyses the reaction (2E,6E,10E)-geranylgeranyl diphosphate = ent-copalyl diphosphate. It participates in secondary metabolite biosynthesis; terpenoid biosynthesis. Functionally, involved in the biosynthesis of ent-kaurene diterpenoids natural products such as oridonin, miltiradiene, eriocalyxin B and nezukol, known to exhibit antitumor, anti-inflammatory and antibacterial activities. Catalyzes the conversion of (2E,6E,10E)-geranylgeranyl diphosphate (GGPP) to ent-copalyl diphosphate (ent-CPP). The protein is Ent-copalyl diphosphate synthase 5 of Isodon rubescens (Rabdosia rubescens).